The following is a 420-amino-acid chain: MTNVLIEDLKWRGLIYQQTDEQGIEDLLNKEQVTLYCGADPTADSLHIGHLLPFLTLRRFQEHGHRPIVLIGGGTGMIGDPSGKSEERVLQTEEQVDKNIEGISKQIHNIFEFGTDHGAVLVNNRDWLGQISLISFLRDYGKHVGVNYMLGKDSIQSRLEHGISYTEFTYTILQAIDFGHLNRELNCKIQVGGSDQWGNITSGIELMRRMYGQTDAYGLTIPLVTKSDGKKFGKSESGAVWLDAEKTSPYEFYQFWINQSDEDVIKFLKYFTFLGKEEIDRLEQSKNEAPHLREAQKTLAEEVTKFIHGEDALNDAIRISQALFSGDLKSLSAKELKDGFKDVPQVTLSNDTTNIVEVLIETGISPSKRQAREDVNNGAIYINGERQQDVNYALAPEDKIDGEFTIIRRGKKKYFMVNYQ.

Tyr-36 lines the L-tyrosine pocket. Residues 41–50 (PTADSLHIGH) carry the 'HIGH' region motif. L-tyrosine-binding residues include Tyr-170 and Gln-174. The 'KMSKS' region motif lies at 231 to 235 (KFGKS). Lys-234 contacts ATP. Residues 353–420 (TNIVEVLIET…KKKYFMVNYQ (68 aa)) enclose the S4 RNA-binding domain.

The protein belongs to the class-I aminoacyl-tRNA synthetase family. TyrS type 1 subfamily. Homodimer.

The protein resides in the cytoplasm. The catalysed reaction is tRNA(Tyr) + L-tyrosine + ATP = L-tyrosyl-tRNA(Tyr) + AMP + diphosphate + H(+). Functionally, catalyzes the attachment of tyrosine to tRNA(Tyr) in a two-step reaction: tyrosine is first activated by ATP to form Tyr-AMP and then transferred to the acceptor end of tRNA(Tyr). The chain is Tyrosine--tRNA ligase from Staphylococcus aureus (strain COL).